We begin with the raw amino-acid sequence, 353 residues long: Paraneoplastic antigen Ma1 (353 aa).

This sequence belongs to the PNMA family. As to expression, testis- and brain-specific. In some cancer patients, specifically expressed by paraneoplastic tumor cells.

The protein resides in the nucleus. The protein localises to the nucleolus. The chain is Paraneoplastic antigen Ma1 (PNMA1) from Homo sapiens (Human).